The chain runs to 115 residues: U31-theraphotoxin-Cg1b (115 aa).

Residues 1–18 (MKLCVIIIASLMVASVSG) form the signal peptide. A propeptide spanning residues 19–51 (RLRKIKGTELDKKMLLEKLGHGMDIRFEETPRE) is cleaved from the precursor. 4 disulfide bridges follow: C52-C67, C60-C73, C64-C113, and C66-C86.

This sequence belongs to the neurotoxin 03 (Tx2) family. 02 subfamily. Expressed by the venom gland.

It localises to the secreted. Probable ion channel inhibitor. The chain is U31-theraphotoxin-Cg1b from Chilobrachys guangxiensis (Chinese earth tiger tarantula).